A 200-amino-acid chain; its full sequence is Integrin beta-1-binding protein 1 (200 aa).

Over residues 1 to 10 (MFRKGKKRHS) the composition is skewed to basic residues. Residues 1-56 (MFRKGKKRHSSSSSQSSEISTKSKSVDSSLGGLSRSSTVASLDTDSTKSSGQSNNN) are disordered. Residues 6-7 (KK) carry the Nuclear localization signal motif. A compositionally biased stretch (low complexity) spans 11–29 (SSSSQSSEISTKSKSVDSS). Over residues 34–56 (SRSSTVASLDTDSTKSSGQSNNN) the composition is skewed to polar residues. Position 38 is a phosphothreonine; by CaMK2 (T38). Position 41 is a phosphoserine (S41). Residues 58-200 (DTCAEFRIKY…FDSVLTSEKP (143 aa)) form the PID domain. The interaction with KRIT1 stretch occupies residues 136–139 (YLII). Residues 139 to 141 (IRM) form an interaction with ITGB1 region.

As to quaternary structure, interacts (via N-terminus and PTB domain) with ROCK1. Found in a complex, at least composed of ITGB1BP1, KRIT1 and RAP1A. Interacts (via C-terminal region) with ITGB1 (via C-terminal cytoplasmic tail); the interaction prevents talin TLN1 binding to ITGB1 and KRIT1 and ITGB1 compete for the same binding site. Interacts with KRIT1 (via N-terminal NPXY motif); the interaction induces the opening conformation of KRIT1 and KRIT1 and ITGB1 compete for the same binding site. Isoform 2 does not interact with ITGB1. Interacts with CDC42 (GTP- or GDP-bound form); the interaction is increased with the CDC42-membrane bound forms and prevents both CDC42 activation and cell spreading. Interacts (via C-terminal domain region) with NME2. Interacts with FERMT2 and RAC1. In terms of processing, phosphorylation at Thr-38 seems to enhance integrin alpha5beta1-mediated cell adhesion. The degree of phosphorylation is regulated by integrin-dependent cell-matrix interaction.

It is found in the nucleus. It localises to the cytoplasm. The protein localises to the cytoskeleton. Its subcellular location is the cell membrane. The protein resides in the cell projection. It is found in the lamellipodium. It localises to the ruffle. In terms of biological role, key regulator of the integrin-mediated cell-matrix interaction signaling by binding to the ITGB1 cytoplasmic tail and preventing the activation of integrin alpha-5/beta-1 (heterodimer of ITGA5 and ITGB1) by talin or FERMT1. Plays a role in cell proliferation, differentiation, spreading, adhesion and migration in the context of mineralization and bone development and angiogenesis. Stimulates cellular proliferation in a fibronectin-dependent manner. Involved in the regulation of beta-1 integrin-containing focal adhesion (FA) site dynamics by controlling its assembly rate during cell adhesion; inhibits beta-1 integrin clustering within FA by directly competing with talin TLN1, and hence stimulates osteoblast spreading and migration in a fibronectin- and/or collagen-dependent manner. Acts as a guanine nucleotide dissociation inhibitor (GDI) by regulating Rho family GTPases during integrin-mediated cell matrix adhesion; reduces the level of active GTP-bound form of both CDC42 and RAC1 GTPases upon cell adhesion to fibronectin. Stimulates the release of active CDC42 from the membranes to maintain it in an inactive cytoplasmic pool. Participates in the translocation of the Rho-associated protein kinase ROCK1 to membrane ruffles at cell leading edges of the cell membrane, leading to an increase of myoblast cell migration on laminin. Plays a role in bone mineralization at a late stage of osteoblast differentiation; modulates the dynamic formation of focal adhesions into fibrillar adhesions, which are adhesive structures responsible for fibronectin deposition and fibrillogenesis. Plays a role in blood vessel development; acts as a negative regulator of angiogenesis by attenuating endothelial cell proliferation and migration, lumen formation and sprouting angiogenesis by promoting AKT phosphorylation and inhibiting ERK1/2 phosphorylation through activation of the Notch signaling pathway. Promotes transcriptional activity of the MYC promoter. This Bos taurus (Bovine) protein is Integrin beta-1-binding protein 1 (ITGB1BP1).